Reading from the N-terminus, the 213-residue chain is Octanoyltransferase (213 aa).

Residues 28-203 enclose the BPL/LPL catalytic domain; sequence GTSPETLLLL…RFPFLLDERL (176 aa). Residues 66–73, 133–135, and 146–148 each bind substrate; these read RGGDVTFH, SIG, and GFA. Cys-164 (acyl-thioester intermediate) is an active-site residue.

The protein belongs to the LipB family.

The protein resides in the cytoplasm. It carries out the reaction octanoyl-[ACP] + L-lysyl-[protein] = N(6)-octanoyl-L-lysyl-[protein] + holo-[ACP] + H(+). It participates in protein modification; protein lipoylation via endogenous pathway; protein N(6)-(lipoyl)lysine from octanoyl-[acyl-carrier-protein]: step 1/2. Catalyzes the transfer of endogenously produced octanoic acid from octanoyl-acyl-carrier-protein onto the lipoyl domains of lipoate-dependent enzymes. Lipoyl-ACP can also act as a substrate although octanoyl-ACP is likely to be the physiological substrate. In Geobacter metallireducens (strain ATCC 53774 / DSM 7210 / GS-15), this protein is Octanoyltransferase.